Consider the following 525-residue polypeptide: Vesicular inhibitory amino acid transporter (525 aa).

The Cytoplasmic portion of the chain corresponds to 1–132; that stretch reads MATLLRSKLS…WNVTNAIQGM (132 aa). Residues 69-111 are disordered; the sequence is PCGDEGAEPPVEGDIHYQRGSGAPLPPSGSKDQVGAGGEFGGH. The helical transmembrane segment at 133-153 threads the bilayer; it reads FVLGLPYAILHGGYLGLFLII. Over 154–204 the chain is Lumenal, vesicle; it reads FAAVVCCYTGKILIACLYEENEDGEVVRVRDSYVAIANACCAPRFPTLGGR. A 3'-nitrotyrosine modification is found at Tyr-186. The helical transmembrane segment at 205–225 threads the bilayer; the sequence is VVNVAQIIELVMTCILYVVVS. The Cytoplasmic portion of the chain corresponds to 226-265; that stretch reads GNLMYNSFPGLPVSQKSWSIIATAVLLPCAFLKNLKAVSK. Residues 266-286 traverse the membrane as a helical segment; that stretch reads FSLLCTLAHFVINILVIAYCL. The Lumenal, vesicle portion of the chain corresponds to 287–305; that stretch reads SRARDWAWEKVKFYIDVKK. A helical membrane pass occupies residues 306–326; sequence FPISIGIIVFSYTSQIFLPSL. Over 327–341 the chain is Cytoplasmic; it reads EGNMQQPSEFHCMMN. A helical membrane pass occupies residues 342 to 362; it reads WTHIAACVLKGLFALVAYLTW. At 363 to 383 the chain is on the lumenal, vesicle side; that stretch reads ADETKEVITDNLPGSIRAVVN. A helical transmembrane segment spans residues 384 to 404; that stretch reads IFLVAKALLSYPLPFFAAVEV. The Cytoplasmic segment spans residues 405–438; it reads LEKSLFQEGSRAFFPACYGGDGRLKSWGLTLRCA. The chain crosses the membrane as a helical span at residues 439–459; that stretch reads LVVFTLLMAIYVPHFALLMGL. Topologically, residues 460–461 are lumenal, vesicle; the sequence is TG. A helical transmembrane segment spans residues 462–482; the sequence is SLTGAGLCFLLPSLFHLRLLW. Over 483-489 the chain is Cytoplasmic; it reads RKLLWHQ. A helical membrane pass occupies residues 490 to 510; it reads VFFDVAIFVIGGICSVSGFVH. Residues 511-525 lie on the Lumenal, vesicle side of the membrane; it reads SLEGLIEAYRTNAED.

It belongs to the amino acid/polyamine transporter 2 family.

It is found in the cytoplasmic vesicle membrane. It localises to the presynapse. The enzyme catalyses 4-aminobutanoate(out) + n H(+)(in) = 4-aminobutanoate(in) + n H(+)(out). The catalysed reaction is glycine(out) + n H(+)(in) = glycine(in) + n H(+)(out). It catalyses the reaction beta-alanine(out) + n H(+)(in) = beta-alanine(in) + n H(+)(out). Functionally, antiporter that exchanges vesicular protons for cytosolic 4-aminobutanoate or to a lesser extend glycine, thus allowing their secretion from nerve terminals. The transport is equally dependent on the chemical and electrical components of the proton gradient. May also transport beta-alanine. Acidification of GABAergic synaptic vesicles is a prerequisite for 4-aminobutanoate uptake. The protein is Vesicular inhibitory amino acid transporter of Macaca fascicularis (Crab-eating macaque).